A 201-amino-acid polypeptide reads, in one-letter code: Recombination protein RecR (201 aa).

The C4-type zinc finger occupies 57-72 (CADCRTFTEQEVCNIC). The Toprim domain occupies 81 to 176 (GQICVVESPA…EASRIAHGVP (96 aa)).

Belongs to the RecR family.

Its function is as follows. May play a role in DNA repair. It seems to be involved in an RecBC-independent recombinational process of DNA repair. It may act with RecF and RecO. The protein is Recombination protein RecR of Escherichia coli O17:K52:H18 (strain UMN026 / ExPEC).